The following is a 226-amino-acid chain: Ras-related protein RGP1 (226 aa).

25 to 32 (GDSAVGKS) contributes to the GTP binding site. The Effector region signature appears at 47-55 (SKATIGVEF). GTP-binding positions include 73 to 77 (DTAGQ) and 131 to 134 (NKSD). S-geranylgeranyl cysteine attachment occurs at residues cysteine 223 and cysteine 224.

The protein belongs to the small GTPase superfamily. Rab family.

Its subcellular location is the cell membrane. Its function is as follows. May play an important role in plant growth and development. In Oryza sativa subsp. japonica (Rice), this protein is Ras-related protein RGP1 (RGP1).